Reading from the N-terminus, the 273-residue chain is Large ribosomal subunit protein uL2 (273 aa).

Positions 221–262 (RGTAMNPVDHPHGGGEGRNFGKHPVTPWGVQTKGKKTRHNKR) are disordered. Over residues 253 to 262 (KGKKTRHNKR) the composition is skewed to basic residues.

Belongs to the universal ribosomal protein uL2 family. As to quaternary structure, part of the 50S ribosomal subunit. Forms a bridge to the 30S subunit in the 70S ribosome.

Its function is as follows. One of the primary rRNA binding proteins. Required for association of the 30S and 50S subunits to form the 70S ribosome, for tRNA binding and peptide bond formation. It has been suggested to have peptidyltransferase activity; this is somewhat controversial. Makes several contacts with the 16S rRNA in the 70S ribosome. This is Large ribosomal subunit protein uL2 from Haemophilus influenzae (strain ATCC 51907 / DSM 11121 / KW20 / Rd).